The following is a 120-amino-acid chain: UPF0102 protein Moth_0988 (120 aa).

Belongs to the UPF0102 family.

This Moorella thermoacetica (strain ATCC 39073 / JCM 9320) protein is UPF0102 protein Moth_0988.